Here is a 494-residue protein sequence, read N- to C-terminus: Putative bifunctional dihydrofolate reductase-thymidylate synthase (494 aa).

Positions 1–167 (MGIGKDGTLP…IKHSFISFVR (167 aa)) constitute a DHFR domain. 2–8 (GIGKDGT) is a binding site for NADP(+). Position 16 (Asp16) interacts with substrate. Residues 40-42 (RKT) and 61-64 (LTRS) contribute to the NADP(+) site. A substrate-binding site is contributed by Ile103. 104 to 111 (GGGEILRQ) provides a ligand contact to NADP(+). Thr124 provides a ligand contact to substrate. The tract at residues 170–494 (KSIAEANDSS…HHKIEMKMAV (325 aa)) is thymidylate synthase. DUMP is bound at residue Arg231. The active site involves Cys376. Residues His377, 395 to 399 (QRSAD), Asn407, and 437 to 439 (HVY) each bind dUMP.

This sequence in the N-terminal section; belongs to the dihydrofolate reductase family. In the C-terminal section; belongs to the thymidylate synthase family.

The enzyme catalyses (6S)-5,6,7,8-tetrahydrofolate + NADP(+) = 7,8-dihydrofolate + NADPH + H(+). The catalysed reaction is dUMP + (6R)-5,10-methylene-5,6,7,8-tetrahydrofolate = 7,8-dihydrofolate + dTMP. Its pathway is cofactor biosynthesis; tetrahydrofolate biosynthesis; 5,6,7,8-tetrahydrofolate from 7,8-dihydrofolate: step 1/1. Functionally, bifunctional enzyme. Involved in de novo dTMP biosynthesis. Key enzyme in folate metabolism. Can play two different roles depending on the source of dihydrofolate: de novo synthesis of tetrahydrofolate or recycling of the dihydrofolate released as one of the end products of the TS catalyzed reaction. Catalyzes an essential reaction for de novo glycine and purine synthesis, DNA precursor synthesis, and for the conversion of dUMP to dTMP. This Oryza sativa subsp. japonica (Rice) protein is Putative bifunctional dihydrofolate reductase-thymidylate synthase.